Consider the following 515-residue polypeptide: Probable cytosol aminopeptidase (515 aa).

2 residues coordinate Mn(2+): Lys274 and Asp279. Lys286 is a catalytic residue. Mn(2+) contacts are provided by Asp297, Asp356, and Glu358. The active site involves Arg360.

It belongs to the peptidase M17 family. Requires Mn(2+) as cofactor.

It is found in the cytoplasm. It catalyses the reaction Release of an N-terminal amino acid, Xaa-|-Yaa-, in which Xaa is preferably Leu, but may be other amino acids including Pro although not Arg or Lys, and Yaa may be Pro. Amino acid amides and methyl esters are also readily hydrolyzed, but rates on arylamides are exceedingly low.. It carries out the reaction Release of an N-terminal amino acid, preferentially leucine, but not glutamic or aspartic acids.. Functionally, presumably involved in the processing and regular turnover of intracellular proteins. Catalyzes the removal of unsubstituted N-terminal amino acids from various peptides. The chain is Probable cytosol aminopeptidase from Desulforapulum autotrophicum (strain ATCC 43914 / DSM 3382 / VKM B-1955 / HRM2) (Desulfobacterium autotrophicum).